We begin with the raw amino-acid sequence, 72 residues long: MATKDTGGGQQKATRSTEEVEEQAQDAQASEDLAERQEKLSDDVDSVLDEIDDVLEENAEDFVRSFVQKGGQ.

A compositionally biased stretch (gly residues) spans 1–10 (MATKDTGGGQ). The tract at residues 1–45 (MATKDTGGGQQKATRSTEEVEEQAQDAQASEDLAERQEKLSDDVD) is disordered. Residues 10–60 (QQKATRSTEEVEEQAQDAQASEDLAERQEKLSDDVDSVLDEIDDVLEENAE) are a coiled coil. The interval 28–66 (QASEDLAERQEKLSDDVDSVLDEIDDVLEENAEDFVRSF) is ARC ATPase binding. The span at 33–42 (LAERQEKLSD) shows a compositional bias: basic and acidic residues. The residue at position 72 (Q72) is a Deamidated glutamine. An Isoglutamyl lysine isopeptide (Gln-Lys) (interchain with K-? in acceptor proteins) cross-link involves residue Q72.

Belongs to the prokaryotic ubiquitin-like protein family. In terms of assembly, strongly interacts with the proteasome-associated ATPase ARC through a hydrophobic interface; the interacting region of Pup lies in its C-terminal half. There is one Pup binding site per ARC hexamer ring. Is modified by deamidation of its C-terminal glutamine to glutamate by the deamidase Dop, a prerequisite to the subsequent pupylation process.

It functions in the pathway protein degradation; proteasomal Pup-dependent pathway. Its function is as follows. Protein modifier that is covalently attached to lysine residues of substrate proteins, thereby targeting them for proteasomal degradation. The tagging system is termed pupylation. The sequence is that of Prokaryotic ubiquitin-like protein Pup from Streptomyces griseus subsp. griseus (strain JCM 4626 / CBS 651.72 / NBRC 13350 / KCC S-0626 / ISP 5235).